The primary structure comprises 112 residues: uncharacterized protein (112 aa).

Coiled-coil stretches lie at residues 15–53 and 86–103; these read AEKK…FFKF and LDYE…TERK.

This is an uncharacterized protein from Aquifex aeolicus (strain VF5).